Here is a 644-residue protein sequence, read N- to C-terminus: Threonine--tRNA ligase (644 aa).

The region spanning methionine 1–threonine 61 is the TGS domain. Residues aspartate 242–proline 533 are catalytic. Residues cysteine 333, histidine 384, and histidine 510 each contribute to the Zn(2+) site.

It belongs to the class-II aminoacyl-tRNA synthetase family. Homodimer. The cofactor is Zn(2+).

Its subcellular location is the cytoplasm. It catalyses the reaction tRNA(Thr) + L-threonine + ATP = L-threonyl-tRNA(Thr) + AMP + diphosphate + H(+). Its function is as follows. Catalyzes the attachment of threonine to tRNA(Thr) in a two-step reaction: L-threonine is first activated by ATP to form Thr-AMP and then transferred to the acceptor end of tRNA(Thr). Also edits incorrectly charged L-seryl-tRNA(Thr). This Psychrobacter arcticus (strain DSM 17307 / VKM B-2377 / 273-4) protein is Threonine--tRNA ligase.